The following is a 316-amino-acid chain: Probable cell division protein WhiA (316 aa).

The segment at residues Thr-275–Thr-309 is a DNA-binding region (H-T-H motif).

This sequence belongs to the WhiA family.

Its function is as follows. Involved in cell division and chromosome segregation. This is Probable cell division protein WhiA from Bacillus velezensis (strain DSM 23117 / BGSC 10A6 / LMG 26770 / FZB42) (Bacillus amyloliquefaciens subsp. plantarum).